The following is a 647-amino-acid chain: Putative ankyrin repeat protein L764 (647 aa).

9 ANK repeats span residues 123–154 (LKDREIYLNSNCDDINLIKFIVTRNDYFQINL), 202–231 (LTQEHIKLAVQNRKIPVLEHLINLGIEYDL), 233–256 (EIINDIKDFDILKYMLEIGNSLNE), 258–284 (NVNIIIFNIHTTQLIEYLMNLGYTINS), 289–319 (SMFSHMLIVSENTDIVEFLKSINAKDSDLTV), 348–377 (DCNLFLKYAIISQDIPNIEYSINKGADLKK), 401–431 (NDVNNFILKIIENDCIETLKYLVDNNYNIDL), 529–558 (FILKEFPEECSSEKMDTIKFLLDFNADNNE), and 588–617 (NGQNIVEYLISDGDHEIFRYLYYNGFDVKN).

The polypeptide is Putative ankyrin repeat protein L764 (Acanthamoeba polyphaga (Amoeba)).